Here is a 46-residue protein sequence, read N- to C-terminus: Endochitinase 2 (46 aa).

It belongs to the glycosyl hydrolase 19 family. Chitinase class I subfamily.

The catalysed reaction is Random endo-hydrolysis of N-acetyl-beta-D-glucosaminide (1-&gt;4)-beta-linkages in chitin and chitodextrins.. Functionally, defense against chitin-containing fungal and bacterial pathogens. The sequence is that of Endochitinase 2 from Arachis hypogaea (Peanut).